A 218-amino-acid polypeptide reads, in one-letter code: Large ribosomal subunit protein uL3 (218 aa).

The protein belongs to the universal ribosomal protein uL3 family. Part of the 50S ribosomal subunit. Forms a cluster with proteins L14 and L19.

In terms of biological role, one of the primary rRNA binding proteins, it binds directly near the 3'-end of the 23S rRNA, where it nucleates assembly of the 50S subunit. The sequence is that of Large ribosomal subunit protein uL3 from Corynebacterium diphtheriae (strain ATCC 700971 / NCTC 13129 / Biotype gravis).